Reading from the N-terminus, the 210-residue chain is Phosphoribosyl-dephospho-CoA transferase (210 aa).

Catalysis depends on residues Asp135 and Asp137.

This sequence belongs to the MdcG family.

It carries out the reaction apo-[malonate decarboxylase ACP] + 2'-(5''-triphospho-alpha-D-ribosyl)-3'-dephospho-CoA = holo-[malonate decarboxylase ACP] + diphosphate. Its function is as follows. Transfers 2'-(5-triphosphoribosyl)-3'-dephosphocoenzyme-A to the apo-[acyl-carrier-protein] of the malonate decarboxylase to yield holo-[acyl-carrier-protein]. In Pseudomonas aeruginosa (strain ATCC 15692 / DSM 22644 / CIP 104116 / JCM 14847 / LMG 12228 / 1C / PRS 101 / PAO1), this protein is Phosphoribosyl-dephospho-CoA transferase.